The sequence spans 135 residues: Large ribosomal subunit protein uL16c (135 aa).

The protein belongs to the universal ribosomal protein uL16 family. As to quaternary structure, part of the 50S ribosomal subunit.

It is found in the plastid. Its subcellular location is the chloroplast. The protein is Large ribosomal subunit protein uL16c of Piper cenocladum (Ant piper).